The sequence spans 156 residues: Ribosomal RNA large subunit methyltransferase H (156 aa).

Residues Leu-73, Gly-104, and Leu-123–Leu-128 each bind S-adenosyl-L-methionine.

Belongs to the RNA methyltransferase RlmH family. As to quaternary structure, homodimer.

It localises to the cytoplasm. The catalysed reaction is pseudouridine(1915) in 23S rRNA + S-adenosyl-L-methionine = N(3)-methylpseudouridine(1915) in 23S rRNA + S-adenosyl-L-homocysteine + H(+). Its function is as follows. Specifically methylates the pseudouridine at position 1915 (m3Psi1915) in 23S rRNA. This chain is Ribosomal RNA large subunit methyltransferase H, found in Shewanella baltica (strain OS223).